The sequence spans 723 residues: Tryptophan 2-monooxygenase (723 aa).

4 residues coordinate FMN: Ser218, Glu238, Arg246, and Arg266. Arg266 serves as a coordination point for substrate.

This sequence belongs to the tryptophan 2-monooxygenase family. It depends on FMN as a cofactor.

It carries out the reaction L-tryptophan + O2 = indole-3-acetamide + CO2 + H2O. It functions in the pathway plant hormone metabolism; auxin biosynthesis. The chain is Tryptophan 2-monooxygenase (iaaM) from Allorhizobium ampelinum (strain ATCC BAA-846 / DSM 112012 / S4) (Agrobacterium vitis (strain S4)).